Reading from the N-terminus, the 215-residue chain is Translation initiation factor 6 (215 aa).

This sequence belongs to the eIF-6 family.

Functionally, binds to the 50S ribosomal subunit and prevents its association with the 30S ribosomal subunit to form the 70S initiation complex. In Archaeoglobus fulgidus (strain ATCC 49558 / DSM 4304 / JCM 9628 / NBRC 100126 / VC-16), this protein is Translation initiation factor 6.